The following is a 216-amino-acid chain: Phosphatidylserine decarboxylase proenzyme (216 aa).

S185 functions as the Schiff-base intermediate with substrate; via pyruvic acid in the catalytic mechanism. Position 185 is a pyruvic acid (Ser); by autocatalysis (S185).

The protein belongs to the phosphatidylserine decarboxylase family. PSD-A subfamily. Heterodimer of a large membrane-associated beta subunit and a small pyruvoyl-containing alpha subunit. Pyruvate is required as a cofactor. Post-translationally, is synthesized initially as an inactive proenzyme. Formation of the active enzyme involves a self-maturation process in which the active site pyruvoyl group is generated from an internal serine residue via an autocatalytic post-translational modification. Two non-identical subunits are generated from the proenzyme in this reaction, and the pyruvate is formed at the N-terminus of the alpha chain, which is derived from the carboxyl end of the proenzyme. The post-translation cleavage follows an unusual pathway, termed non-hydrolytic serinolysis, in which the side chain hydroxyl group of the serine supplies its oxygen atom to form the C-terminus of the beta chain, while the remainder of the serine residue undergoes an oxidative deamination to produce ammonia and the pyruvoyl prosthetic group on the alpha chain.

Its subcellular location is the cell membrane. It carries out the reaction a 1,2-diacyl-sn-glycero-3-phospho-L-serine + H(+) = a 1,2-diacyl-sn-glycero-3-phosphoethanolamine + CO2. It participates in phospholipid metabolism; phosphatidylethanolamine biosynthesis; phosphatidylethanolamine from CDP-diacylglycerol: step 2/2. Catalyzes the formation of phosphatidylethanolamine (PtdEtn) from phosphatidylserine (PtdSer). This chain is Phosphatidylserine decarboxylase proenzyme, found in Nitrosomonas europaea (strain ATCC 19718 / CIP 103999 / KCTC 2705 / NBRC 14298).